A 977-amino-acid polypeptide reads, in one-letter code: uncharacterized protein (977 aa).

The signal sequence occupies residues 1 to 24 (MQSNLLKVLGVLAIVATLVCFIFA). The disordered stretch occupies residues 125-146 (TESTRPGKSNLDDKGNMIPIPR). The next 6 membrane-spanning stretches (helical) occupy residues 612 to 632 (IKAI…LGFA), 722 to 742 (LGLS…IVII), 754 to 774 (AFMA…FLLF), 796 to 816 (VVMM…LDFV), 833 to 853 (FIGT…INWF), and 866 to 886 (GVNM…YGYV). A disordered region spans residues 918 to 977 (KALSPIGMDDKTRQGITGRAEARLKQRNKTLDQAEKNRKNTPKEGGEKTNAEPPQPEARG). Residues 937–967 (AEARLKQRNKTLDQAEKNRKNTPKEGGEKTN) show a composition bias toward basic and acidic residues.

The protein belongs to the TrbL/VirB6 family.

It localises to the cell membrane. This is an uncharacterized protein from Rickettsia felis (strain ATCC VR-1525 / URRWXCal2) (Rickettsia azadi).